We begin with the raw amino-acid sequence, 177 residues long: Large ribosomal subunit protein uL6 (177 aa).

Belongs to the universal ribosomal protein uL6 family. Part of the 50S ribosomal subunit.

This protein binds to the 23S rRNA, and is important in its secondary structure. It is located near the subunit interface in the base of the L7/L12 stalk, and near the tRNA binding site of the peptidyltransferase center. The chain is Large ribosomal subunit protein uL6 from Ectopseudomonas mendocina (strain ymp) (Pseudomonas mendocina).